The chain runs to 473 residues: Cell division protein FtsZ homolog 2-2, chloroplastic (473 aa).

GTP contacts are provided by residues 124 to 128, 213 to 215, glutamate 244, and arginine 248; these read GGGSN and GTG. Position 282 is a phosphothreonine; by PGK1 (threonine 282). Aspartate 292 contributes to the GTP binding site. The segment at 424–455 is disordered; sequence EEGEGRPLQATQADASMGATRRPSSSFTEGSS. Positions 445–454 are enriched in polar residues; sequence RPSSSFTEGS.

It belongs to the FtsZ family. In terms of assembly, aggregates to form a contractile ring-like structure; contraction of the ring was accompanied by an increase in the filament turnover rate. Self-interacts and binds to FTSZ1 in heteropolymers to form two morphologically distinct types of filaments, termed type-I (smooth filaments) and -II (rough filaments), in a GTP-dependent manner. Part of a complex made of ARC3, ARC6, FTSZ1 and FTSZ2. Interacts (via C-terminus) with ARC6. Interacts with CDP1/PARC6. Binds to PGK1. In terms of processing, phosphorylation at Thr-282 is required for the formation of contractile ring at the chloroplast midpoint.

It localises to the plastid. The protein resides in the chloroplast stroma. It is found in the chloroplast thylakoid membrane. Its function is as follows. Exhibits GTPase activity. Component of the plastid division machinery that forms a contractile ring at the division site. Contributes to plastid division in the vegetative shoot apex, at the shoot apical meristem (SAM) where the proplastid-to-chloroplast transition takes place. The protein is Cell division protein FtsZ homolog 2-2, chloroplastic of Arabidopsis thaliana (Mouse-ear cress).